Reading from the N-terminus, the 191-residue chain is Holliday junction branch migration complex subunit RuvA (191 aa).

Residues M1 to G64 are domain I. The domain II stretch occupies residues S65–L138. The tract at residues L138–V141 is flexible linker. Positions P142 to A191 are domain III.

It belongs to the RuvA family. Homotetramer. Forms an RuvA(8)-RuvB(12)-Holliday junction (HJ) complex. HJ DNA is sandwiched between 2 RuvA tetramers; dsDNA enters through RuvA and exits via RuvB. An RuvB hexamer assembles on each DNA strand where it exits the tetramer. Each RuvB hexamer is contacted by two RuvA subunits (via domain III) on 2 adjacent RuvB subunits; this complex drives branch migration. In the full resolvosome a probable DNA-RuvA(4)-RuvB(12)-RuvC(2) complex forms which resolves the HJ.

It localises to the cytoplasm. Its function is as follows. The RuvA-RuvB-RuvC complex processes Holliday junction (HJ) DNA during genetic recombination and DNA repair, while the RuvA-RuvB complex plays an important role in the rescue of blocked DNA replication forks via replication fork reversal (RFR). RuvA specifically binds to HJ cruciform DNA, conferring on it an open structure. The RuvB hexamer acts as an ATP-dependent pump, pulling dsDNA into and through the RuvAB complex. HJ branch migration allows RuvC to scan DNA until it finds its consensus sequence, where it cleaves and resolves the cruciform DNA. The protein is Holliday junction branch migration complex subunit RuvA of Thiobacillus denitrificans (strain ATCC 25259 / T1).